We begin with the raw amino-acid sequence, 545 residues long: Hyaluronidase PH-20 (545 aa).

The signal sequence occupies residues 1 to 35 (MGVLKFKHIFFGSAVELSGVFQIVFIFLLIPCCLT). 2 cysteine pairs are disulfide-bonded: Cys60/Cys355 and Cys224/Cys239. Asn82 carries N-linked (GlcNAc...) asparagine glycosylation. Catalysis depends on Glu148, which acts as the Proton donor. A glycan (N-linked (GlcNAc...) asparagine) is linked at Asn180. Asn372 carries N-linked (GlcNAc...) asparagine glycosylation. Disulfide bonds link Cys380–Cys391, Cys385–Cys439, and Cys441–Cys468.

This sequence belongs to the glycosyl hydrolase 56 family. In terms of tissue distribution, testis.

It is found in the cell membrane. The enzyme catalyses Random hydrolysis of (1-&gt;4)-linkages between N-acetyl-beta-D-glucosamine and D-glucuronate residues in hyaluronate.. Involved in sperm-egg adhesion. Upon fertilization sperm must first penetrate a layer of cumulus cells that surrounds the egg before reaching the zona pellucida. The cumulus cells are embedded in a matrix containing hyaluronic acid which is formed prior to ovulation. This protein aids in penetrating the layer of cumulus cells by digesting hyaluronic acid. This is Hyaluronidase PH-20 (SPAM1) from Oryctolagus cuniculus (Rabbit).